The sequence spans 299 residues: 33 kDa chaperonin (299 aa).

2 disulfide bridges follow: Cys-239/Cys-241 and Cys-272/Cys-275.

It belongs to the HSP33 family. In terms of processing, under oxidizing conditions two disulfide bonds are formed involving the reactive cysteines. Under reducing conditions zinc is bound to the reactive cysteines and the protein is inactive.

It localises to the cytoplasm. Functionally, redox regulated molecular chaperone. Protects both thermally unfolding and oxidatively damaged proteins from irreversible aggregation. Plays an important role in the bacterial defense system toward oxidative stress. The polypeptide is 33 kDa chaperonin (Acaryochloris marina (strain MBIC 11017)).